Reading from the N-terminus, the 152-residue chain is Superoxide dismutase [Cu-Zn] (152 aa).

Cu cation-binding residues include His45, His47, and His62. The cysteines at positions 56 and 145 are disulfide-linked. Positions 62, 70, 79, and 82 each coordinate Zn(2+). His119 is a binding site for Cu cation.

The protein belongs to the Cu-Zn superoxide dismutase family. Homodimer. Cu cation serves as cofactor. The cofactor is Zn(2+).

It localises to the cytoplasm. It carries out the reaction 2 superoxide + 2 H(+) = H2O2 + O2. Functionally, destroys radicals which are normally produced within the cells and which are toxic to biological systems. The protein is Superoxide dismutase [Cu-Zn] (SODCC) of Panax ginseng (Korean ginseng).